The primary structure comprises 311 residues: Acetyl-coenzyme A carboxylase carboxyl transferase subunit alpha (311 aa).

The region spanning 32–289 is the CoA carboxyltransferase C-terminal domain; it reads ELNLLEERLR…KSVLEQKLAQ (258 aa).

The protein belongs to the AccA family. In terms of assembly, acetyl-CoA carboxylase is a heterohexamer composed of biotin carboxyl carrier protein (AccB), biotin carboxylase (AccC) and two subunits each of ACCase subunit alpha (AccA) and ACCase subunit beta (AccD).

It is found in the cytoplasm. It carries out the reaction N(6)-carboxybiotinyl-L-lysyl-[protein] + acetyl-CoA = N(6)-biotinyl-L-lysyl-[protein] + malonyl-CoA. The protein operates within lipid metabolism; malonyl-CoA biosynthesis; malonyl-CoA from acetyl-CoA: step 1/1. Its function is as follows. Component of the acetyl coenzyme A carboxylase (ACC) complex. First, biotin carboxylase catalyzes the carboxylation of biotin on its carrier protein (BCCP) and then the CO(2) group is transferred by the carboxyltransferase to acetyl-CoA to form malonyl-CoA. In Exiguobacterium sibiricum (strain DSM 17290 / CCUG 55495 / CIP 109462 / JCM 13490 / 255-15), this protein is Acetyl-coenzyme A carboxylase carboxyl transferase subunit alpha.